Consider the following 353-residue polypeptide: Biotin synthase (353 aa).

In terms of domain architecture, Radical SAM core spans 51–270 (NEVQCNQLLN…IALARIMMPK (220 aa)). [4Fe-4S] cluster contacts are provided by cysteine 66, cysteine 70, and cysteine 73. [2Fe-2S] cluster is bound by residues cysteine 110, cysteine 141, cysteine 201, and arginine 274. The tract at residues 330-353 (APVEAHSHDHDHDHHDHHHGHSHS) is disordered. A compositionally biased stretch (basic and acidic residues) spans 334 to 343 (AHSHDHDHDH). Over residues 344–353 (HDHHHGHSHS) the composition is skewed to basic residues.

The protein belongs to the radical SAM superfamily. Biotin synthase family. Homodimer. Requires [4Fe-4S] cluster as cofactor. [2Fe-2S] cluster is required as a cofactor.

The enzyme catalyses (4R,5S)-dethiobiotin + (sulfur carrier)-SH + 2 reduced [2Fe-2S]-[ferredoxin] + 2 S-adenosyl-L-methionine = (sulfur carrier)-H + biotin + 2 5'-deoxyadenosine + 2 L-methionine + 2 oxidized [2Fe-2S]-[ferredoxin]. It participates in cofactor biosynthesis; biotin biosynthesis; biotin from 7,8-diaminononanoate: step 2/2. Catalyzes the conversion of dethiobiotin (DTB) to biotin by the insertion of a sulfur atom into dethiobiotin via a radical-based mechanism. The polypeptide is Biotin synthase (Rhodopseudomonas palustris (strain HaA2)).